Here is a 140-residue protein sequence, read N- to C-terminus: Large ribosomal subunit protein uL14 (140 aa).

This sequence belongs to the universal ribosomal protein uL14 family.

The chain is Large ribosomal subunit protein uL14 (RPL23) from Nicotiana tabacum (Common tobacco).